Here is a 433-residue protein sequence, read N- to C-terminus: Cyclin-dependent kinase 15 (433 aa).

A disordered region spans residues 46–83; sequence ASSSTASFHPRGLEAASAQKLKSKRPRSNSDSFQEENL. Positions 52–336 constitute a Protein kinase domain; it reads SFHPRGLEAA…SKLPNYNPEW (285 aa). ATP-binding positions include 58 to 66 and E81; that span reads LEAASAQKL. T173 functions as the Proton acceptor in the catalytic mechanism.

This sequence belongs to the protein kinase superfamily. CMGC Ser/Thr protein kinase family. CDC2/CDKX subfamily. Requires Mg(2+) as cofactor.

The enzyme catalyses L-seryl-[protein] + ATP = O-phospho-L-seryl-[protein] + ADP + H(+). The catalysed reaction is L-threonyl-[protein] + ATP = O-phospho-L-threonyl-[protein] + ADP + H(+). Its function is as follows. Serine/threonine-protein kinase that acts like an antiapoptotic protein that counters TRAIL/TNFSF10-induced apoptosis by inducing phosphorylation of BIRC5 at 'Thr-34'. This is Cyclin-dependent kinase 15 (Cdk15) from Mus musculus (Mouse).